A 696-amino-acid chain; its full sequence is Polyribonucleotide nucleotidyltransferase (696 aa).

Positions 486 and 492 each coordinate Mg(2+). Residues 553 to 612 (PRIIVRNIPKDRIGELIGPGGKNVRGISELTGAELYIEDDGRVTISGSNQESAEKAAKMV) form the KH domain. In terms of domain architecture, S1 motif spans 622-690 (GKIYEGKVKR…KTGKIDLSRK (69 aa)).

The protein belongs to the polyribonucleotide nucleotidyltransferase family. Mg(2+) serves as cofactor.

Its subcellular location is the cytoplasm. The catalysed reaction is RNA(n+1) + phosphate = RNA(n) + a ribonucleoside 5'-diphosphate. In terms of biological role, involved in mRNA degradation. Catalyzes the phosphorolysis of single-stranded polyribonucleotides processively in the 3'- to 5'-direction. This chain is Polyribonucleotide nucleotidyltransferase, found in Leptospira borgpetersenii serovar Hardjo-bovis (strain JB197).